The sequence spans 265 residues: Ni-sirohydrochlorin a,c-diamide reductive cyclase complex, component CfbC (265 aa).

Belongs to the NifH/BchL/ChlL family. In terms of assembly, homodimer. The Ni-sirohydrochlorin a,c-diamide reductive cyclase complex is composed of a NifH homolog component CfbC and a NifD homolog component CfbD. [4Fe-4S] cluster serves as cofactor.

The enzyme catalyses Ni-sirohydrochlorin a,c-diamide + 3 AH2 + ATP + H2O = 15,17(3)-seco-F430-17(3)-acid + 3 A + ADP + phosphate. In terms of biological role, involved in the biosynthesis of the unique nickel-containing tetrapyrrole coenzyme F430, the prosthetic group of methyl-coenzyme M reductase (MCR), which plays a key role in methanogenesis and anaerobic methane oxidation. Catalyzes both the six-electron reduction of the tetrahydroporphyrin ring system and the gamma-lactamization of the c-acetamide side chain of Ni-sirohydrochlorin a,c-diamide to yield 15,17(3)-seco-F430-17(3)-acid (seco-F430), the last intermediate in the biosynthesis of the coenzyme F430. In Methanosarcina barkeri (strain Fusaro / DSM 804), this protein is Ni-sirohydrochlorin a,c-diamide reductive cyclase complex, component CfbC.